Here is a 299-residue protein sequence, read N- to C-terminus: Aliphatic sulfonates import ATP-binding protein SsuB (299 aa).

Residues 36 to 257 (LHVQQVIKRY…QHGSAAFAQI (222 aa)) form the ABC transporter domain. 68–75 (GRSGCGKS) serves as a coordination point for ATP.

It belongs to the ABC transporter superfamily. Aliphatic sulfonates importer (TC 3.A.1.17.2) family. The complex is composed of two ATP-binding proteins (SsuB), two transmembrane proteins (SsuC) and a solute-binding protein (SsuA).

It is found in the cell inner membrane. The catalysed reaction is ATP + H2O + aliphatic sulfonate-[sulfonate-binding protein]Side 1 = ADP + phosphate + aliphatic sulfonateSide 2 + [sulfonate-binding protein]Side 1.. Its function is as follows. Part of the ABC transporter complex SsuABC involved in aliphatic sulfonates import. Responsible for energy coupling to the transport system. The protein is Aliphatic sulfonates import ATP-binding protein SsuB of Cupriavidus pinatubonensis (strain JMP 134 / LMG 1197) (Cupriavidus necator (strain JMP 134)).